Here is a 901-residue protein sequence, read N- to C-terminus: MASNIKEQAKKQFELNGQSYTYYDLQTLEEKGLAKISKLPYSIRVLLESVLRQEDDFVITDDHIKALSKFGNAGNEGEVPFKPSRVILQDFTGVPAVVDLASLRKAMNDVGGDINKINPEVPVDLVIDHSVQVDSYANPEALERNMKLEFERNYERYQFLNWATKAFDNYNAVPPATGIVHQVNLEYLANVVHVRDVDGEKTAFPDTLVGTDSHTTMINGIGVLGWGVGGIEAEAGMLGQPSYFPIPEVIGVRLTHSLPQGSTATDLALRVTEELRKKGVVGKFVEFFGPGVQHLPLADRATIANMAPEYGATCGFFPVDEESLKYMKLTGRDEEHIELVKEYLQQNHMFFDVEKEDPEYTDVIDLDLSTVEASLSGPKRPQDLIFLSDMKKEFEKSVTAPAGNQGHGLDQSEFDKKAEINFNDGSKATMKTGDIAIAAITSCTNTSNPYVMLGAGLVAKKAVEKGLKVPEFVKTSLAPGSKVVTGYLRDSGLQQYLDDLGFNLVGYGCTTCIGNSGPLLPEIEKAVADEDLLVTSVLSGNRNFEGRIHPLVKANYLASPQLVVAYALAGTVDIDLQNEPIGKGKDGKDVYLQDIWPSIQEVSDTVDKVVTPELFLEEYKNVYHNNEMWNEIDVTDEPLYDFDPNSTYIQNPTFFQGLSKEPGKIEPLKSLRVMGKFGDSVTTDHISPAGAIGKDTPAGKYLLDHDVAIRNFNSYGSRRGNHEVMVRGTFANIRIKNQLAPGTEGGFTTYWPTGEIMPIYDAAMKYKEDGTGLVVLAGNDYGMGSSRDWAAKGTNLLGVKTVIAQSYERIHRSNLVMMGVLPLQFQQGESAEALGLDGKEEISVDINEDVQPHDLVNVTAKKENGEIINFKAIVRFDSLVELDYYRHGGILQMVLRNKLAQ.

The [4Fe-4S] cluster site is built by Cys-443, Cys-509, and Cys-512.

The protein belongs to the aconitase/IPM isomerase family. In terms of assembly, monomer. It depends on [4Fe-4S] cluster as a cofactor.

The enzyme catalyses citrate = D-threo-isocitrate. The catalysed reaction is (2S,3R)-3-hydroxybutane-1,2,3-tricarboxylate = 2-methyl-cis-aconitate + H2O. It participates in carbohydrate metabolism; tricarboxylic acid cycle; isocitrate from oxaloacetate: step 2/2. Its pathway is organic acid metabolism; propanoate degradation. Functionally, involved in the catabolism of short chain fatty acids (SCFA) via the tricarboxylic acid (TCA)(acetyl degradation route) and probably the 2-methylcitrate cycle I (propionate degradation route). Catalyzes the reversible isomerization of citrate to isocitrate via cis-aconitate. Could catalyze the hydration of 2-methyl-cis-aconitate to yield (2R,3S)-2-methylisocitrate. The apo form of AcnA functions as a RNA-binding regulatory protein. In Staphylococcus epidermidis (strain ATCC 12228 / FDA PCI 1200), this protein is Aconitate hydratase A (acnA).